Reading from the N-terminus, the 413-residue chain is Putative F-box/kelch-repeat protein At3g22870 (413 aa).

One can recognise an F-box domain in the interval 2-53 (TLTISDLPRDLKKKIFSRIPLRYVRALRLTCKEWETLIKSRSLKIDEEESQM). Kelch repeat units follow at residues 156 to 202 (LLRF…IGVS) and 331 to 379 (KVFI…RRRQ).

This Arabidopsis thaliana (Mouse-ear cress) protein is Putative F-box/kelch-repeat protein At3g22870.